The sequence spans 658 residues: Probable methyl-accepting chemotaxis protein BT9727_0469 (658 aa).

Residues 1–14 (MLQGKLRRSSLKAK) are Cytoplasmic-facing. The helical transmembrane segment at 15–35 (LLVSFVIVLILPSIVIGWTSY) threads the bilayer. The Extracellular segment spans residues 36–283 (QQAKTNFNET…ANPIFYKTLT (248 aa)). Positions 44–109 (ETILQSAEDN…NKLHPEIEAI (66 aa)) form a coiled coil. The 72-residue stretch at 150–221 (ITAPYKSSTT…AHPTMKPGDK (72 aa)) folds into the Cache domain. The helical transmembrane segment at 284–304 (VIGISLIIGGVLIYFIIASII) threads the bilayer. Residues 301 to 353 (ASIISPLKQLVISSKKISEGDLTETITVHSKDEIGQLGESFNEMAASLHHVIS) enclose the HAMP domain. Topologically, residues 305–658 (SPLKQLVISS…LQEMIGKFKV (354 aa)) are cytoplasmic. Glutamate 368 carries the post-translational modification Glutamate methyl ester (Glu). The Methyl-accepting transducer domain occupies 372-622 (SMKQTSEATE…ENAASVQNIA (251 aa)). Residue glutamine 592 is modified to Deamidated glutamine. Glutamate methyl ester (Gln) is present on glutamine 592. Glutamate 627 and glutamate 634 each carry glutamate methyl ester (Glu).

It belongs to the methyl-accepting chemotaxis (MCP) protein family.

Its subcellular location is the cell membrane. Its function is as follows. Chemotactic-signal transducers respond to changes in the concentration of attractants and repellents in the environment, transduce a signal from the outside to the inside of the cell, and facilitate sensory adaptation through the variation of the level of methylation. This Bacillus thuringiensis subsp. konkukian (strain 97-27) protein is Probable methyl-accepting chemotaxis protein BT9727_0469.